We begin with the raw amino-acid sequence, 172 residues long: MRFTPAIVIAAFCSLAVAAPAAKAIARSPSEAVEDYVIPIDKKRGEAVEDYVIPIDKKRGEAVEDYVIPIDKRGEAVEDYVIPIDKRGEAVEDYVIPIDKKRGEAVEDYVIPIDKRGEAVEDYVIPIDRKRGEAVEDYVIPIDKRGEAVEDYVIPIDKRGEAVEDYVIPIDK.

The first 18 residues, M1 to A18, serve as a signal peptide directing secretion. 11 propeptides span residues A19 to D35, K42 to D50, K57 to D65, K72 to D79, K86 to D93, K100 to D108, K115 to D122, R129 to D137, K144 to D151, K158 to D165, and K172.

PhomA is processed by several endopeptidases including kexin proteases as well as the cluster-specific S41 family peptidase phomP1 and the oligopeptidase phomG to produce 10 identical copies of the hexapeptide Tyr-Val-Ile-Pro-Ile-Asp, that is further modified to yield phomapsins. The timing and order of proteolysis of the phomA precursor and PTMs are still unknown. Two tyrosinase-like enzymes, phomQ1 and phomQ2, catalyze the chlorination and hydroxylation of Tyr, respectively. PhomYb, is proposed to be involved in the construction of the macrocyclic structure. The other 4 ustYa family proteins may be involved in PTMs that generate the unique structure of phomopsin A. PhomYa is required for the hydroxylation of C-beta of Tyr. PhomYc, phomYd, and phomYe are responsible for the biosynthesis of 2,3-dehydroisoleucine (dIle), 2,3-dehydroaspartic acid (dAsp), and 3,4-dehydroproline (dPro), respectively. While dIle formation by phomYc is indispensable for the installation of dAsp by phomYd, the order of the other PTMs have not been elucidated yet. Most of the biosynthetic enzymes likely have broad substrate specificity, and thus, there might be a metabolic grid from a precursor to phomopsin A. The enzyme(s) responsible for the biosynthesis of 3,4-dehydrovaline (dVal) have also not been identified yet. Finally, phomM acts as an S-adenosylmethionine-dependent alpha-N-methyltransferase that catalyzes two successive N-methylation reactions, converting N-desmethyl-phomopsin A to phomopsin A and phomopsin A further to an N,N-dimethylated congener called phomopsin E.

Its pathway is mycotoxin biosynthesis. Ribosomally synthesized cyclic peptide phomopsin precursor; part of the gene cluster that mediates the biosynthesis of the phomopsins, a group of hexapeptide mycotoxins which infects lupins and causes lupinosis disease in livestock. The phomA translated product contains a 10-fold repeated peptide embedding the hexapeptide Tyr-Val-Ile-Pro-Ile-Asp, that is converted into phomapsins. After being excised from the precursor peptide by kexin proteases, the core peptides are cyclized and modified post-translationally by enzymes encoded within the corresponding gene cluster. This Diaporthe leptostromiformis (Lupinosis disease fungus) protein is Ribosomally synthesized cyclic peptide phomopsin precursor phomA.